The following is a 119-amino-acid chain: uncharacterized protein (119 aa).

Residues 74 to 91 (LSVHFLLNVISAILSMLI) traverse the membrane as a helical segment.

The protein resides in the membrane. This is an uncharacterized protein from Schizosaccharomyces pombe (strain 972 / ATCC 24843) (Fission yeast).